Consider the following 147-residue polypeptide: D-aminoacyl-tRNA deacylase (147 aa).

A Gly-cisPro motif, important for rejection of L-amino acids motif is present at residues 137–138; it reads GP.

This sequence belongs to the DTD family. Homodimer.

It localises to the cytoplasm. It carries out the reaction glycyl-tRNA(Ala) + H2O = tRNA(Ala) + glycine + H(+). It catalyses the reaction a D-aminoacyl-tRNA + H2O = a tRNA + a D-alpha-amino acid + H(+). An aminoacyl-tRNA editing enzyme that deacylates mischarged D-aminoacyl-tRNAs. Also deacylates mischarged glycyl-tRNA(Ala), protecting cells against glycine mischarging by AlaRS. Acts via tRNA-based rather than protein-based catalysis; rejects L-amino acids rather than detecting D-amino acids in the active site. By recycling D-aminoacyl-tRNA to D-amino acids and free tRNA molecules, this enzyme counteracts the toxicity associated with the formation of D-aminoacyl-tRNA entities in vivo and helps enforce protein L-homochirality. The chain is D-aminoacyl-tRNA deacylase from Acinetobacter baumannii (strain ATCC 17978 / DSM 105126 / CIP 53.77 / LMG 1025 / NCDC KC755 / 5377).